Consider the following 134-residue polypeptide: Small ribosomal subunit protein uS9 (134 aa).

The disordered stretch occupies residues 109-134 (DARRTEPHKPSKSSKGPRAKRQKSYR). Positions 118 to 134 (PSKSSKGPRAKRQKSYR) are enriched in basic residues.

Belongs to the universal ribosomal protein uS9 family.

The chain is Small ribosomal subunit protein uS9 from Methanococcus maripaludis (strain DSM 14266 / JCM 13030 / NBRC 101832 / S2 / LL).